The chain runs to 185 residues: Transcription termination/antitermination protein NusG (185 aa).

The region spanning 134-163 (VGQQVRIVEGPFATFSGEVEEVMSERNKVR) is the KOW domain.

This sequence belongs to the NusG family.

Functionally, participates in transcription elongation, termination and antitermination. This chain is Transcription termination/antitermination protein NusG, found in Treponema pallidum (strain Nichols).